The chain runs to 485 residues: UDP-N-acetylmuramate--L-alanine ligase (485 aa).

Residue 125–131 (GTHGKTT) participates in ATP binding.

This sequence belongs to the MurCDEF family.

It is found in the cytoplasm. The catalysed reaction is UDP-N-acetyl-alpha-D-muramate + L-alanine + ATP = UDP-N-acetyl-alpha-D-muramoyl-L-alanine + ADP + phosphate + H(+). It participates in cell wall biogenesis; peptidoglycan biosynthesis. Functionally, cell wall formation. This Stutzerimonas stutzeri (strain A1501) (Pseudomonas stutzeri) protein is UDP-N-acetylmuramate--L-alanine ligase.